A 364-amino-acid polypeptide reads, in one-letter code: MQERHTEQDYRALLIADTPIIDVRAPIEFEQGAMPAAINLPLMNNDERAAVGTCYKQQGSDAALALGHKLVAGEIRQQRMDAWRAACLQNPQGILCCARGGQRSHIVQSWLYAAGIDYPLVEGGYKALRQAAIQATIELAQKPIVLIGGCTGSGKTLLVQQQPNGVDLEGLARHRGSAFGRTLQPQLSQASFENLLAAEMLKTDARQDLRLWVLEDESRMIGSNHLPECLRERMTQAAIAVVEDPFEIRLERLNEEYFLRMHHDFTHAYGDEQGWQEYCEYLHHGLSAIKRRLGLQRYNELAAQLDTALTTQLTTDSTDGHLAWLVPLLKEYYDPMYRYQLEKKAEKVVFRGEWAEVAEWVKTQ.

The Rhodanese domain maps to 14–137; that stretch reads LIADTPIIDV…LRQAAIQATI (124 aa). The active-site S-selanylcysteine intermediate is the cysteine 97.

This sequence belongs to the SelU family. Monomer.

The enzyme catalyses 5-methylaminomethyl-2-thiouridine(34) in tRNA + selenophosphate + (2E)-geranyl diphosphate + H2O + H(+) = 5-methylaminomethyl-2-selenouridine(34) in tRNA + (2E)-thiogeraniol + phosphate + diphosphate. It catalyses the reaction 5-methylaminomethyl-2-thiouridine(34) in tRNA + (2E)-geranyl diphosphate = 5-methylaminomethyl-S-(2E)-geranyl-thiouridine(34) in tRNA + diphosphate. It carries out the reaction 5-methylaminomethyl-S-(2E)-geranyl-thiouridine(34) in tRNA + selenophosphate + H(+) = 5-methylaminomethyl-2-(Se-phospho)selenouridine(34) in tRNA + (2E)-thiogeraniol. The catalysed reaction is 5-methylaminomethyl-2-(Se-phospho)selenouridine(34) in tRNA + H2O = 5-methylaminomethyl-2-selenouridine(34) in tRNA + phosphate. Functionally, involved in the post-transcriptional modification of the uridine at the wobble position (U34) of tRNA(Lys), tRNA(Glu) and tRNA(Gln). Catalyzes the conversion of 2-thiouridine (S2U-RNA) to 2-selenouridine (Se2U-RNA). Acts in a two-step process involving geranylation of 2-thiouridine (S2U) to S-geranyl-2-thiouridine (geS2U) and subsequent selenation of the latter derivative to 2-selenouridine (Se2U) in the tRNA chain. In Shigella sonnei (strain Ss046), this protein is tRNA 2-selenouridine synthase.